A 201-amino-acid chain; its full sequence is MNILVIKSSVNEKKGSYSSHLSDLFIKFYLEIHPEDQIEVYDLNQFGLANTNLTMKNFEDKTFYQKAESDFWINKLRNADKIVFSTSMTNFNYSATTKNFFDAITVPNKTFLLDKNTGKYTGLLKNIQNVQILTAQGAPLGWYPFGNHSALIKQIFEFLGAKVRSDFFVLDGTKVAPNNQKPIADFVAQRQNQIKILAENF.

FMN-binding positions include serine 9 and 16–18 (SYS).

This sequence belongs to the azoreductase type 1 family. In terms of assembly, homodimer. FMN is required as a cofactor.

The catalysed reaction is 2 a quinone + NADH + H(+) = 2 a 1,4-benzosemiquinone + NAD(+). It carries out the reaction N,N-dimethyl-1,4-phenylenediamine + anthranilate + 2 NAD(+) = 2-(4-dimethylaminophenyl)diazenylbenzoate + 2 NADH + 2 H(+). In terms of biological role, quinone reductase that provides resistance to thiol-specific stress caused by electrophilic quinones. Also exhibits azoreductase activity. Catalyzes the reductive cleavage of the azo bond in aromatic azo compounds to the corresponding amines. The sequence is that of FMN-dependent NADH:quinone oxidoreductase from Mesomycoplasma hyopneumoniae (strain 7448) (Mycoplasma hyopneumoniae).